Consider the following 274-residue polypeptide: HMP-PP phosphatase (274 aa).

The Nucleophile role is filled by Asp8. Asp8, Asp10, and Asp213 together coordinate Mg(2+).

Belongs to the HAD-like hydrolase superfamily. Cof family. The cofactor is Mg(2+).

The enzyme catalyses 4-amino-2-methyl-5-(diphosphooxymethyl)pyrimidine + H2O = 4-amino-2-methyl-5-(phosphooxymethyl)pyrimidine + phosphate + H(+). Catalyzes the hydrolysis of 4-amino-2-methyl-5-hydroxymethylpyrimidine pyrophosphate (HMP-PP) to 4-amino-2-methyl-5-hydroxymethylpyrimidine phosphate (HMP-P). In Serratia proteamaculans (strain 568), this protein is HMP-PP phosphatase.